Reading from the N-terminus, the 113-residue chain is UPF0102 protein Dgeo_1894 (113 aa).

It belongs to the UPF0102 family.

The chain is UPF0102 protein Dgeo_1894 from Deinococcus geothermalis (strain DSM 11300 / CIP 105573 / AG-3a).